The following is a 445-amino-acid chain: Maltoporin (445 aa).

An N-terminal signal peptide occupies residues 1-24 (MITLRKLPLAVAVAAGVMSAQAMA).

Belongs to the porin LamB (TC 1.B.3) family. In terms of assembly, homotrimer formed of three 18-stranded antiparallel beta-barrels, containing three independent channels.

The protein resides in the cell outer membrane. It catalyses the reaction beta-maltose(in) = beta-maltose(out). Its function is as follows. Involved in the transport of maltose and maltodextrins. This chain is Maltoporin, found in Shigella flexneri.